The following is a 995-amino-acid chain: Polyprotein nsP1234 (995 aa).

ADP-D-ribose is bound by residues Gly30 and Phe32. 4 residues coordinate Zn(2+): Cys180, Cys182, Cys205, and Cys223. Short sequence motifs (FGDF; binding to host G3BP1) lie at residues 347 to 350 (FGDL) and 364 to 367 (FGDF). The region spanning 749–864 (DAVLETDIAS…HGVKSDKLLA (116 aa)) is the RdRp catalytic domain.

In terms of assembly, interacts with mRNA-capping enzyme nsP1. Interacts with host DDX1. Interacts with host DDX3. Interacts (via C-terminus) with host G3BP1; this interaction inhibits the formation of host stress granules on viral mRNAs and the nsp3-G3BP1 complexes bind viral RNAs and probably orchestrate the assembly of viral replication complexes. Interacts (via C-terminus) with host G3BP2; this interaction inhibits the formation of host stress granules on viral mRNAs and the nsp3-G3BP2 complexes bind viral RNAs and probably orchestrate the assembly of viral replication complexes. As to quaternary structure, interacts with mRNA-capping enzyme nsP1. Interacts with protease nsP2. interacts with itself. The cofactor is Mg(2+). Mn(2+) is required as a cofactor. Polyprotein P1234: Specific enzymatic cleavages in vivo yield mature proteins. The processing of the polyprotein is temporally regulated. In early stages (1.7 hpi), P1234 is first cleaved in trans through its nsP2 protease activity, releasing P123' and nsP4, which associate to form the early replication complex. At the same time, P1234 is also cut at the nsP1/nsP2 site early in infection but with lower efficiency. After replication of the viral minus-strand RNAs (4 hpi), the polyproteins are cut at the nsP1/nsP2 and nsP2/nsP3 sites very efficiently, preventing accumulation of P123' and P1234 and allowing the formation of the late replication complex. NsP3'/nsP4 site is not cleaved anymore and P34 is produced rather than nsP4. Post-translationally, specific enzymatic cleavages in vivo yield mature proteins. The processing of the polyprotein is temporally regulated. In early stages (1.7 hpi), P123 is cleaved at the nsP1/nsP2 site with low efficiency. After replication of the viral minus-strand RNAs (4 hpi), the polyproteins are cut at the nsP1/nsP2 and nsP2/nsP3 sites very efficiently, preventing accumulation of P123 and allowing the formation of the late replication complex. In terms of processing, specific enzymatic cleavages in vivo yield mature proteins. The processing of the polyprotein is temporally regulated. In early stages (1.7 hpi), P123' is cleaved at the nsP1/nsP2 site with low efficiency. After replication of the viral minus-strand RNAs (4 hpi), the polyproteins are cut at the nsP1/nsP2 and nsP2/nsP3 sites very efficiently, preventing accumulation of P123' and allowing the formation of the late replication complex. Phosphorylated by host on serines and threonines. Post-translationally, ubiquitinated; targets the protein for rapid degradation via the ubiquitin system. Nsp4 is present in extremely low quantities due to low frequency of translation through the amber stop-codon and the degradation by the ubiquitin pathway.

It is found in the host cytoplasmic vesicle membrane. It carries out the reaction RNA(n) + a ribonucleoside 5'-triphosphate = RNA(n+1) + diphosphate. The enzyme catalyses RNA(n) + ATP = RNA(n)-3'-adenine ribonucleotide + diphosphate. The catalysed reaction is 4-O-(ADP-D-ribosyl)-L-aspartyl-[protein] + H2O = L-aspartyl-[protein] + ADP-D-ribose + H(+). It catalyses the reaction 5-O-(ADP-D-ribosyl)-L-glutamyl-[protein] + H2O = L-glutamyl-[protein] + ADP-D-ribose + H(+). It carries out the reaction ADP-alpha-D-ribose 1''-phosphate + H2O = ADP-D-ribose + phosphate. In terms of biological role, polyprotein P1234: Inactive precursor of the viral replicase, which is activated by cleavages carried out by the viral protease nsP2. Functionally, the early replication complex formed by the polyprotein P123 and nsP4 synthesizes minus-strand RNAs. As soon P123 is cleaved into mature proteins, the plus-strand RNAs synthesis begins. Its function is as follows. The early replication complex formed by the polyprotein P123' and nsP4 synthesizes minus-strand RNAs. Polyprotein P123' is a short-lived polyprotein that accumulates during early stage of infection. As soon P123' is cleaved into mature proteins, the plus-strand RNAs synthesis begins. Seems to be essential for minus-strand RNAs and subgenomic 26S mRNAs synthesis. Displays mono-ADP-ribosylhydrolase activity. ADP-ribosylation is a post-translational modification that controls various processes of the host cell and the virus probably needs to revert it for optimal viral replication. Binds proteins of FXR family and sequesters them into the viral RNA replication complexes thereby inhibiting the formation of host stress granules on viral mRNAs. The nsp3'-FXR complexes bind viral RNAs and probably orchestrate the assembly of viral replication complexes, thanks to the ability of FXR family members to self-assemble and bind DNA. In terms of biological role, seems to be essential for minus-strand RNAs and subgenomic 26S mRNAs synthesis. Displays mono-ADP-ribosylhydrolase activity. ADP-ribosylation is a post-translantional modification that controls various processes of the host cell and the virus probably needs to revert it for optimal viral replication. Binds proteins of G3BP family and sequesters them into the viral RNA replication complexes thereby inhibiting the formation of host stress granules on viral mRNAs. The nsp3-G3BP complexes bind viral RNAs and probably orchestrate the assembly of viral replication complexes, thanks to the ability of G3BP family members to self-assemble and bind DNA. Functionally, RNA dependent RNA polymerase. Replicates genomic and antigenomic RNA by recognizing replications specific signals. The early replication complex formed by the polyprotein P123 and nsP4 synthesizes minus-strand RNAs. The late replication complex composed of fully processed nsP1-nsP4 is responsible for the production of genomic and subgenomic plus-strand RNAs. The core catalytic domain of nsP4 also possesses terminal adenylyltransferase (TATase) activity that is probably involved in maintenance and repair of the poly(A) tail, an element required for replication of the viral genome. In Middelburg virus, this protein is Polyprotein nsP1234.